We begin with the raw amino-acid sequence, 157 residues long: uncharacterized protein (157 aa).

Residues 1–157 (MNRGPPLRSR…SFSFLVPSNS (157 aa)) are disordered. A compositionally biased stretch (pro residues) spans 8-31 (RSRPPSSPPPASAFPGPSPFPSPS). Positions 62-71 (RTSHPPRCPH) are enriched in basic residues. The span at 76 to 95 (PSAPSPPFTPPHPLPTPTPS) shows a compositional bias: pro residues. Low complexity-rich tracts occupy residues 96-117 (SSPR…SLAS) and 124-157 (SFSS…PSNS).

This is an uncharacterized protein from Vitis vinifera (Grape).